The primary structure comprises 385 residues: 8-amino-7-oxononanoate synthase (385 aa).

R21 lines the substrate pocket. Position 108–109 (108–109) interacts with pyridoxal 5'-phosphate; that stretch reads GF. H133 lines the substrate pocket. Residues S179, H207, and T233 each coordinate pyridoxal 5'-phosphate. K236 is subject to N6-(pyridoxal phosphate)lysine. Residue T352 participates in substrate binding.

The protein belongs to the class-II pyridoxal-phosphate-dependent aminotransferase family. BioF subfamily. As to quaternary structure, homodimer. Requires pyridoxal 5'-phosphate as cofactor.

The enzyme catalyses 6-carboxyhexanoyl-[ACP] + L-alanine + H(+) = (8S)-8-amino-7-oxononanoate + holo-[ACP] + CO2. Its pathway is cofactor biosynthesis; biotin biosynthesis. Functionally, catalyzes the decarboxylative condensation of pimeloyl-[acyl-carrier protein] and L-alanine to produce 8-amino-7-oxononanoate (AON), [acyl-carrier protein], and carbon dioxide. The polypeptide is 8-amino-7-oxononanoate synthase (Salmonella enteritidis PT4 (strain P125109)).